The primary structure comprises 156 residues: Small ribosomal subunit protein uS7 (156 aa).

Belongs to the universal ribosomal protein uS7 family. As to quaternary structure, part of the 30S ribosomal subunit. Contacts proteins S9 and S11.

One of the primary rRNA binding proteins, it binds directly to 16S rRNA where it nucleates assembly of the head domain of the 30S subunit. Is located at the subunit interface close to the decoding center, probably blocks exit of the E-site tRNA. This Syntrophotalea carbinolica (strain DSM 2380 / NBRC 103641 / GraBd1) (Pelobacter carbinolicus) protein is Small ribosomal subunit protein uS7.